A 258-amino-acid chain; its full sequence is Snake venom serine proteinase 5 (258 aa).

The first 18 residues, 1-18 (MVLIRVLANLLILQLSYA), serve as a signal peptide directing secretion. Positions 19–24 (QKSSEL) are excised as a propeptide. The region spanning 25 to 249 (VVGGDECNIN…YNDWIQSIIA (225 aa)) is the Peptidase S1 domain. Intrachain disulfides connect Cys-31/Cys-163, Cys-50/Cys-66, Cys-98/Cys-256, Cys-142/Cys-210, Cys-174/Cys-189, and Cys-200/Cys-225. Residue Asn-44 is glycosylated (N-linked (GlcNAc...) asparagine). Catalysis depends on charge relay system residues His-65 and Asp-110. The active-site Charge relay system is Ser-204.

This sequence belongs to the peptidase S1 family. Snake venom subfamily. In terms of assembly, monomer. In terms of tissue distribution, expressed by the venom gland.

Its subcellular location is the secreted. In terms of biological role, snake venom serine protease that may act in the hemostasis system of the prey. This Crotalus adamanteus (Eastern diamondback rattlesnake) protein is Snake venom serine proteinase 5.